The sequence spans 96 residues: uncharacterized protein (96 aa).

This is an uncharacterized protein from Escherichia coli (strain K12).